The following is a 288-amino-acid chain: Cell division protein ZipA (288 aa).

A topological domain (periplasmic) is located at residue Met-1. A helical transmembrane segment spans residues 2–22; it reads EIGLREWLIVIGIIVIAGILF. Topologically, residues 23-288 are cytoplasmic; the sequence is DGWRRMRGGK…FERRALTQKR (266 aa). 2 stretches are compositionally biased toward basic and acidic residues: residues 66-75 and 83-93; these read KEPQLDEHDL and REAREPRESGS. The segment at 66-141 is disordered; it reads KEPQLDEHDL…AKSSPAVADK (76 aa). A compositionally biased stretch (low complexity) spans 106 to 117; the sequence is GDLNLDLDLDGG.

This sequence belongs to the ZipA family. Interacts with FtsZ via their C-terminal domains.

The protein resides in the cell inner membrane. In terms of biological role, essential cell division protein that stabilizes the FtsZ protofilaments by cross-linking them and that serves as a cytoplasmic membrane anchor for the Z ring. Also required for the recruitment to the septal ring of downstream cell division proteins. This is Cell division protein ZipA from Pseudomonas fluorescens (strain Pf0-1).